The following is a 996-amino-acid chain: NACHT, LRR and PYD domains-containing protein 9 (996 aa).

The region spanning 1 to 94 (MAESFFSDFG…WRKARNEIRQ (94 aa)) is the Pyrin domain. An NACHT domain is found at 150-469 (PTVVLHGPEG…FYMFTRPKDP (320 aa)). 156–163 (GPEGIGKT) is a binding site for ATP. LRR repeat units follow at residues 748 to 769 (KLNL…VLCE), 777 to 798 (ALEA…HLSQ), 805 to 825 (SLTF…TTLC), 834 to 855 (NLQE…DIAT), 862 to 883 (KLKT…QLCK), and 891 to 914 (KLEN…ASAL).

The protein belongs to the NLRP family. As to quaternary structure, sensor component of NLRP9 inflammasomes. Inflammasomes are supramolecular complexes that assemble in the cytosol in response to pathogens, such as rotavirus, and play critical roles in innate immunity and inflammation. The core of NLRP9 inflammasomes consists of a signal sensor component (NLRP9), an adapter (ASC/PYCARD), which recruits an effector pro-inflammatory caspase (CASP1). Within the complex, NLRP9 and PYCARD interact via their respective DAPIN/pyrin domains. This interaction initiates speck formation (nucleation) which greatly enhances further addition of soluble PYCARD molecules to the speck in a prion-like polymerization process. Clustered PYCARD nucleates the formation of CASP1 filaments through the interaction of their respective CARD domains, acting as a platform for CASP1 polymerization. CASP1 filament formation increases local enzyme concentration, resulting in trans-autocleavage and activation. Active CASP1 then processes IL1B and IL18 precursors, leading to the release of mature cytokines in the extracellular milieu and inflammatory response. Interacts with DHX9 upon rotavirus infection; this interaction may trigger inflammasome activation and inflammatory response. As to expression, detected exclusively in testis and ovary, and at high level in the oocyte from antral follicles.

It localises to the cytoplasm. Its subcellular location is the inflammasome. Its function is as follows. As the sensor component of the NLRP9 inflammasome, plays a crucial role in innate immunity and inflammation. In response to pathogens, including rotavirus, initiates the formation of the inflammasome polymeric complex, made of NLRP9, PYCARD and CASP1. Recruitment of proCASP1 to the inflammasome promotes its activation and CASP1-catalyzed IL1B and IL18 maturation and release in the extracellular milieu. The active cytokines stimulate inflammatory responses. Inflammasomes can also induce pyroptosis, an inflammatory form of programmed cell death. NLRP9 inflammasome activation may be initiated by DHX9 interaction with viral double-stranded RNA (dsRNA), preferentially to short dsRNA segments. This Bos taurus (Bovine) protein is NACHT, LRR and PYD domains-containing protein 9 (NLRP9).